The primary structure comprises 293 residues: MKLECIAPAKINLALHVIGRRTDGYHLLESLVAFAAFGDRLSVEKAEADTFLLAGPFRDGLEGSGNFVLNARDLLREKFASRASSPVAITLEKNLPVASGIGGGSSDAATGLKLLTRYWEIETEPAELAQIGLGLGADVPMCLFGQPLIASGIGEKLEPVSTLPSLPILLVNPGLPLATPAVFSSLVERENAPLPPAPRNKSAAELVNWLRLTRNDLEPAALSIMPVIGIVLRLLQTEGALIARMSGSGATCFGIFETASKARQAGEMISRRHPGWFVRATQTRASMPELSHV.

K10 is a catalytic residue. Residue 96–106 coordinates ATP; it reads PVASGIGGGSS. D138 is a catalytic residue.

This sequence belongs to the GHMP kinase family. IspE subfamily.

It carries out the reaction 4-CDP-2-C-methyl-D-erythritol + ATP = 4-CDP-2-C-methyl-D-erythritol 2-phosphate + ADP + H(+). Its pathway is isoprenoid biosynthesis; isopentenyl diphosphate biosynthesis via DXP pathway; isopentenyl diphosphate from 1-deoxy-D-xylulose 5-phosphate: step 3/6. Catalyzes the phosphorylation of the position 2 hydroxy group of 4-diphosphocytidyl-2C-methyl-D-erythritol. This chain is 4-diphosphocytidyl-2-C-methyl-D-erythritol kinase, found in Chelativorans sp. (strain BNC1).